The sequence spans 1275 residues: Serine/threonine-protein kinase ULK4 (1275 aa).

The 277-residue stretch at 4–280 folds into the Protein kinase domain; sequence FILYEEIGRG…WTRLLQHSFW (277 aa). Catalysis depends on Asp121, which acts as the Proton acceptor. Disordered stretches follow at residues 299 to 346 and 359 to 393; these read SRNT…EFRP and FLLSSRPTPRTSTAVEVSPGEDRTHCSPQKTSPLT. Residues 336–346 show a composition bias toward basic and acidic residues; the sequence is FRLENPTEFRP. Composition is skewed to polar residues over residues 363 to 373 and 384 to 393; these read SRPTPRTSTAV and CSPQKTSPLT. HEAT repeat units lie at residues 727–765, 842–880, 926–964, 1025–1063, 1151–1189, and 1213–1253; these read LIQEKDFVSTIIRLLESPSTYIRAKAFLVLLYILIYNRE, LKMCLPLMPIVLHLVTSQVFRPQVVTEEFLFSYGTILSH, STVVDYILPPLVSLVQSQNVEWRLFSLRLLSETTSLLVN, LVEESKLIPLIFEVTLEHQESILGNTMQSVIALLNNLVA, NRPLTDLISLLIPLLPNEDPEIFDVSSKCLSILVQLYGG, and PKEQ…LAPG.

Belongs to the protein kinase superfamily. Ser/Thr protein kinase family. APG1/unc-51/ULK1 subfamily.

The catalysed reaction is L-seryl-[protein] + ATP = O-phospho-L-seryl-[protein] + ADP + H(+). It catalyses the reaction L-threonyl-[protein] + ATP = O-phospho-L-threonyl-[protein] + ADP + H(+). May be involved in the remodeling of cytoskeletal components, such as alpha-tubulin, and in this way regulates neurite branching and elongation, as well as cell motility. The polypeptide is Serine/threonine-protein kinase ULK4 (ULK4) (Pongo abelii (Sumatran orangutan)).